A 145-amino-acid polypeptide reads, in one-letter code: D-aminoacyl-tRNA deacylase (145 aa).

Positions 137 to 138 match the Gly-cisPro motif, important for rejection of L-amino acids motif; it reads GP.

This sequence belongs to the DTD family. As to quaternary structure, homodimer.

It localises to the cytoplasm. The catalysed reaction is glycyl-tRNA(Ala) + H2O = tRNA(Ala) + glycine + H(+). It catalyses the reaction a D-aminoacyl-tRNA + H2O = a tRNA + a D-alpha-amino acid + H(+). Its function is as follows. An aminoacyl-tRNA editing enzyme that deacylates mischarged D-aminoacyl-tRNAs. Also deacylates mischarged glycyl-tRNA(Ala), protecting cells against glycine mischarging by AlaRS. Acts via tRNA-based rather than protein-based catalysis; rejects L-amino acids rather than detecting D-amino acids in the active site. By recycling D-aminoacyl-tRNA to D-amino acids and free tRNA molecules, this enzyme counteracts the toxicity associated with the formation of D-aminoacyl-tRNA entities in vivo and helps enforce protein L-homochirality. This chain is D-aminoacyl-tRNA deacylase, found in Salmonella enteritidis PT4 (strain P125109).